Here is a 111-residue protein sequence, read N- to C-terminus: Large ribosomal subunit protein uL24 (111 aa).

It belongs to the universal ribosomal protein uL24 family. Part of the 50S ribosomal subunit.

Functionally, one of two assembly initiator proteins, it binds directly to the 5'-end of the 23S rRNA, where it nucleates assembly of the 50S subunit. Its function is as follows. One of the proteins that surrounds the polypeptide exit tunnel on the outside of the subunit. The chain is Large ribosomal subunit protein uL24 from Bifidobacterium animalis subsp. lactis (strain AD011).